The primary structure comprises 132 residues: uncharacterized protein (132 aa).

Disordered regions lie at residues glycine 36–serine 69 and glutamine 97–arginine 132. Serine 101 is subject to Phosphoserine.

Copurifies with proteins HOL1, MMP1, PEX7 and PLB1.

This is an uncharacterized protein from Saccharomyces cerevisiae (strain ATCC 204508 / S288c) (Baker's yeast).